The chain runs to 61 residues: Small ribosomal subunit protein uS14 (61 aa).

Cysteine 24, cysteine 27, cysteine 40, and cysteine 43 together coordinate Zn(2+).

The protein belongs to the universal ribosomal protein uS14 family. Zinc-binding uS14 subfamily. In terms of assembly, part of the 30S ribosomal subunit. Contacts proteins S3 and S10. It depends on Zn(2+) as a cofactor.

Functionally, binds 16S rRNA, required for the assembly of 30S particles and may also be responsible for determining the conformation of the 16S rRNA at the A site. The chain is Small ribosomal subunit protein uS14 from Elusimicrobium minutum (strain Pei191).